The sequence spans 436 residues: O-phosphoseryl-tRNA(Sec) selenium transferase (436 aa).

Residues 1–44 (MLDFNIEGLIPKNMEKRGELVLNEYLKEIEDVFNHRKIPENGID) form a tetramerization region. R72 contacts pyridoxal 5'-phosphate. The phosphate loop (P-loop) stretch occupies residues 93–103 (GRSGNLVDPQP). Substrate contacts are provided by R94, S95, and Q102. N6-(pyridoxal phosphate)lysine is present on K278. R307 lines the substrate pocket.

This sequence belongs to the SepSecS family. Homotetramer. Pyridoxal 5'-phosphate serves as cofactor.

It catalyses the reaction O-phospho-L-seryl-tRNA(Sec) + selenophosphate + H2O = L-selenocysteinyl-tRNA(Sec) + 2 phosphate. It participates in aminoacyl-tRNA biosynthesis; selenocysteinyl-tRNA(Sec) biosynthesis; selenocysteinyl-tRNA(Sec) from L-seryl-tRNA(Sec) (archaeal/eukaryal route): step 2/2. In terms of biological role, converts O-phosphoseryl-tRNA(Sec) to selenocysteinyl-tRNA(Sec) required for selenoprotein biosynthesis. The sequence is that of O-phosphoseryl-tRNA(Sec) selenium transferase (spcS) from Methanococcus maripaludis (strain DSM 14266 / JCM 13030 / NBRC 101832 / S2 / LL).